The primary structure comprises 196 residues: DnaA initiator-associating protein DiaA (196 aa).

The 163-residue stretch at 34 to 196 (MVQSLLNGNK…DNTLFPHQDD (163 aa)) folds into the SIS domain.

The protein belongs to the SIS family. DiaA subfamily. As to quaternary structure, homotetramer; dimer of dimers.

In terms of biological role, required for the timely initiation of chromosomal replication via direct interactions with the DnaA initiator protein. This chain is DnaA initiator-associating protein DiaA, found in Photorhabdus laumondii subsp. laumondii (strain DSM 15139 / CIP 105565 / TT01) (Photorhabdus luminescens subsp. laumondii).